The primary structure comprises 62 residues: Small ribosomal subunit protein eS31 (62 aa).

Positions 29, 32, 48, and 51 each coordinate Zn(2+). A C4-type zinc finger spans residues 29–51 (CPRCGSFMAFHKWPVPRWHCGKC).

The protein belongs to the eukaryotic ribosomal protein eS31 family. As to quaternary structure, part of the 30S ribosomal subunit. Requires Zn(2+) as cofactor.

This chain is Small ribosomal subunit protein eS31, found in Hyperthermus butylicus (strain DSM 5456 / JCM 9403 / PLM1-5).